The sequence spans 222 residues: DNA-directed RNA polymerase V subunit 5A (222 aa).

This sequence belongs to the archaeal Rpo5/eukaryotic RPB5 RNA polymerase subunit family. In terms of assembly, component of the RNA polymerase V complex. Expressed in roots, leaves, siliques and seeds, and to a lower level, in flower buds and flowers.

It is found in the nucleus. Its function is as follows. DNA-dependent RNA polymerase catalyzes the transcription of DNA into RNA using the four ribonucleoside triphosphates as substrates. Component of RNA polymerase V involved in RNA-directed DNA methylation-dependent (RdDM) silencing of endogenous repeated sequences, including transposable elements. Required for establishment of DNA methylation. The chain is DNA-directed RNA polymerase V subunit 5A (NRPE5A) from Arabidopsis thaliana (Mouse-ear cress).